The following is a 299-amino-acid chain: HTH-type transcriptional regulator CrgA (299 aa).

The 60-residue stretch at 1 to 60 (MKTNSEELTVFVQVVESGSFSRAAEQLAMANSAVSRIVKRLEEKLGVNLLNRTTRQLSLT) folds into the HTH lysR-type domain. A DNA-binding region (H-T-H motif) is located at residues 20 to 39 (FSRAAEQLAMANSAVSRIVK).

The protein belongs to the LysR transcriptional regulatory family. In terms of assembly, forms oligomers. Oligomerization is required for DNA binding.

In terms of biological role, involved in the regulation of bacterial adhesion to host epithelial cells. May play a central regulatory role in meningococcal adhesion, particularly in switching from initial adhesion to intimate adhesion by downregulating the bacterial surface structures that hinder this adhesion. During intimate adhesion, negatively regulates the expression of pilC1, encoding a pilus-associated protein, pilE, encoding the pilin, and sia genes, encoding the capsule. Also negatively regulates its own expression. May also regulate other genes that are involved in intimate adhesion. Binds specifically to the promoter region of pilC1 and crgA (both harboring a CREN element), and pilE and sia (both devoid of a CREN element). Acts through interaction with RNA polymerase (RNAP). Interaction with RNAP leads to the production of short abortive transcripts, suggesting that CrgA may act by preventing RNAP from clearing the promoter. The protein is HTH-type transcriptional regulator CrgA of Neisseria meningitidis serogroup C (strain 8013).